The following is a 571-amino-acid chain: MNSLQILSFVGFTLLVAVITWWKVRKTDTGSQQGYFLAGRSLKAPVIAASLMLTNLSTEQLVGLSGQAYKSGMSVMGWEVTSAVTLIFLALIFLPRYLKRGIATIPDFLEERYDKTTRIIIDFCFLIATGVCFLPIVLYSGALALNSLFHVGESLQISHGAAIWLLVILLGLAGILYAVIGGLRAMAVADSINGIGLVIGGLMVPVFGLIAMGKGSFMQGIEQLTTVHAEKLNSIGGPTDPLPIGAAFTGLILVNTFYWCTNQGIVQRTLASKSLAEGQKGALLTAVLKMLDPLVLVLPGLIAFHLYQDLPKADMAYPTLVNNVLPVPMVGFFGAVLFGAVISTFNGFLNSASTLFSMGIYRRIINQNAEPQQLVTVGRKFGFFIAIVSVLVAPWIANAPQGLYSWMKQLNGIYNVPLVTIIIMGFFFPRIPALAAKVAMGIGIISYITINYLVKFDFHFLYVLACTFCINVVVMLVIGFIKPRATPFTFKDAFAVDMKPWKNVKIASIGILFAMIGVYAGLAEFGGYGTRWLAMISYFIAAVVIVYLIFDSWRHRHDPAVTFTPDGKDSL.

Topologically, residues 1 to 3 (MNS) are cytoplasmic. The chain crosses the membrane as a helical span at residues 4–24 (LQILSFVGFTLLVAVITWWKV). The Periplasmic segment spans residues 25-74 (RKTDTGSQQGYFLAGRSLKAPVIAASLMLTNLSTEQLVGLSGQAYKSGMS). Residues 75 to 95 (VMGWEVTSAVTLIFLALIFLP) traverse the membrane as a helical segment. Over 96-118 (RYLKRGIATIPDFLEERYDKTTR) the chain is Cytoplasmic. A helical membrane pass occupies residues 119–139 (IIIDFCFLIATGVCFLPIVLY). Residues 140–162 (SGALALNSLFHVGESLQISHGAA) are Periplasmic-facing. A helical membrane pass occupies residues 163-183 (IWLLVILLGLAGILYAVIGGL). Residues 184-191 (RAMAVADS) are Cytoplasmic-facing. A helical membrane pass occupies residues 192 to 212 (INGIGLVIGGLMVPVFGLIAM). The Periplasmic segment spans residues 213–240 (GKGSFMQGIEQLTTVHAEKLNSIGGPTD). A helical membrane pass occupies residues 241–261 (PLPIGAAFTGLILVNTFYWCT). Residues 262-283 (NQGIVQRTLASKSLAEGQKGAL) are Cytoplasmic-facing. A helical membrane pass occupies residues 284 to 304 (LTAVLKMLDPLVLVLPGLIAF). Residues 305-324 (HLYQDLPKADMAYPTLVNNV) lie on the Periplasmic side of the membrane. The chain crosses the membrane as a helical span at residues 325–345 (LPVPMVGFFGAVLFGAVISTF). Residues 346–380 (NGFLNSASTLFSMGIYRRIINQNAEPQQLVTVGRK) lie on the Cytoplasmic side of the membrane. Residues 381–401 (FGFFIAIVSVLVAPWIANAPQ) traverse the membrane as a helical segment. At 402-415 (GLYSWMKQLNGIYN) the chain is on the periplasmic side. A helical transmembrane segment spans residues 416 to 436 (VPLVTIIIMGFFFPRIPALAA). K437 is a topological domain (cytoplasmic). The chain crosses the membrane as a helical span at residues 438–458 (VAMGIGIISYITINYLVKFDF). Residues 459–460 (HF) lie on the Periplasmic side of the membrane. A helical transmembrane segment spans residues 461-481 (LYVLACTFCINVVVMLVIGFI). The Cytoplasmic segment spans residues 482–505 (KPRATPFTFKDAFAVDMKPWKNVK). The chain crosses the membrane as a helical span at residues 506–526 (IASIGILFAMIGVYAGLAEFG). Residues 527-532 (GYGTRW) lie on the Periplasmic side of the membrane. The chain crosses the membrane as a helical span at residues 533–553 (LAMISYFIAAVVIVYLIFDSW). Residues 554–571 (RHRHDPAVTFTPDGKDSL) lie on the Cytoplasmic side of the membrane.

It belongs to the sodium:solute symporter (SSF) (TC 2.A.21) family.

It is found in the cell inner membrane. This is an uncharacterized protein from Escherichia coli (strain K12).